The chain runs to 287 residues: MLSLGFSLPPPSDNKLIITNNNQYNYRTNLANVCSNNNVNAVGDQLVTLPEGLKHVAVIMDGHRRWAKNKGLTVKQGHRAGGEKIQVLTRLCSQWGVKVLTIFAFSTENWVRLEEEVDFLMKLFLELIGSQEILDEWTRDGRRVSFIGDKSIFSKSLQEALAVMEERTKFNSGLHVIIAINYSGRQDILQATKSIAIKVKNGDLTVKDIDQSLFEQELDTHCTEFSEPDLLIRTSGEKRVSNFMLWQLAYTELYFANKLFPDMEEADFIEALTSFKSRQRRYGGKKI.

A chloroplast-targeting transit peptide spans 1-34 (MLSLGFSLPPPSDNKLIITNNNQYNYRTNLANVC). Residue Asp-61 is part of the active site.

The protein belongs to the UPP synthase family. Mg(2+) is required as a cofactor. Expressed in leaf trichomes and stem trichomes.

It localises to the plastid. The protein resides in the chloroplast. In terms of biological role, uses geranylgeranyl diphosphate to catalyze the cis-prenyl chain elongation and produce polyprenyl diphosphate with a chain of 35 carbons. In Solanum lycopersicum (Tomato), this protein is Cis-prenyltransferase 7, chloroplastic.